The following is a 180-amino-acid chain: NAD(P)H-quinone oxidoreductase subunit I, chloroplastic (180 aa).

2 consecutive 4Fe-4S ferredoxin-type domains span residues 55-84 and 95-124; these read GRIH…VDWR and LNYS…MTEE. C64, C67, C70, C74, C104, C107, C110, and C114 together coordinate [4Fe-4S] cluster.

Belongs to the complex I 23 kDa subunit family. NDH is composed of at least 16 different subunits, 5 of which are encoded in the nucleus. [4Fe-4S] cluster serves as cofactor.

Its subcellular location is the plastid. It is found in the chloroplast thylakoid membrane. The enzyme catalyses a plastoquinone + NADH + (n+1) H(+)(in) = a plastoquinol + NAD(+) + n H(+)(out). The catalysed reaction is a plastoquinone + NADPH + (n+1) H(+)(in) = a plastoquinol + NADP(+) + n H(+)(out). Functionally, NDH shuttles electrons from NAD(P)H:plastoquinone, via FMN and iron-sulfur (Fe-S) centers, to quinones in the photosynthetic chain and possibly in a chloroplast respiratory chain. The immediate electron acceptor for the enzyme in this species is believed to be plastoquinone. Couples the redox reaction to proton translocation, and thus conserves the redox energy in a proton gradient. In Agrostis stolonifera (Creeping bentgrass), this protein is NAD(P)H-quinone oxidoreductase subunit I, chloroplastic.